We begin with the raw amino-acid sequence, 219 residues long: Large ribosomal subunit protein uL4 (219 aa).

The disordered stretch occupies residues 43–101 (AAARQGTHKTKRRGEVRGGGKKPYRQKGTGRARQGSTRAPQFAGGGVVHGPQPRDYSQR). The segment covering 61 to 72 (GGKKPYRQKGTG) has biased composition (basic residues).

This sequence belongs to the universal ribosomal protein uL4 family. Part of the 50S ribosomal subunit.

One of the primary rRNA binding proteins, this protein initially binds near the 5'-end of the 23S rRNA. It is important during the early stages of 50S assembly. It makes multiple contacts with different domains of the 23S rRNA in the assembled 50S subunit and ribosome. Its function is as follows. Forms part of the polypeptide exit tunnel. The polypeptide is Large ribosomal subunit protein uL4 (Streptomyces coelicolor (strain ATCC BAA-471 / A3(2) / M145)).